The following is a 313-amino-acid chain: Small glutamine-rich tetratricopeptide repeat-containing protein alpha (313 aa).

The segment at 69-97 (KELPPDLRSPQETPPSEEDSAEAERLKTE) is disordered. A Phosphoserine modification is found at Ser77. A Phosphothreonine modification is found at Thr81. A Phosphoserine modification is found at Ser84. TPR repeat units lie at residues 91–124 (AERL…NPAN), 125–158 (AVYF…DPSY), and 159–192 (SKAY…DPDN). N6-acetyllysine is present on Lys137. Ser301 is subject to Phosphoserine. Phosphothreonine is present on Thr303. At Ser305 the chain carries Phosphoserine.

Belongs to the SGT family. As to quaternary structure, homodimer. Homooligomer. Interacts with DNAJC5 and DNAJC5B. Interacts (via TPR repeats) with HSP90AA1. Interacts (via Gln-rich region) with SLC2A1. Interacts with HSP90AB1. Interacts (via TPR repeats) with HSPA8/Hsc70; the interaction is direct. Interacts with BAG6 (via ubiquitin-like domain); interaction prevents interaction between BAG6 and RNF126. Forms a multiprotein complex, at least composed of DNAJB12, DNAJB14, HSPA8/Hsc70 and SGTA; interaction with DNAJB14 and HSPA8/Hsc70 is direct.

The protein resides in the cytoplasm. Its subcellular location is the nucleus. Co-chaperone that binds misfolded and hydrophobic patches-containing client proteins in the cytosol. Mediates their targeting to the endoplasmic reticulum but also regulates their sorting to the proteasome when targeting fails. Functions in tail-anchored/type II transmembrane proteins membrane insertion constituting with ASNA1 and the BAG6 complex a targeting module. Functions upstream of the BAG6 complex and ASNA1, binding more rapidly the transmembrane domain of newly synthesized proteins. It is also involved in the regulation of the endoplasmic reticulum-associated misfolded protein catabolic process via its interaction with BAG6: collaborates with the BAG6 complex to maintain hydrophobic substrates in non-ubiquitinated states. Competes with RNF126 for interaction with BAG6, preventing the ubiquitination of client proteins associated with the BAG6 complex. Binds directly to HSC70 and HSP70 and regulates their ATPase activity. The polypeptide is Small glutamine-rich tetratricopeptide repeat-containing protein alpha (SGTA) (Bos taurus (Bovine)).